Here is a 429-residue protein sequence, read N- to C-terminus: Phosphomethylpyrimidine synthase (429 aa).

Residues asparagine 66, methionine 95, tyrosine 124, histidine 163, 185–187, 226–229, and glutamate 265 each bind substrate; these read SRG and DGLR. Histidine 269 provides a ligand contact to Zn(2+). Residue tyrosine 292 participates in substrate binding. Histidine 333 serves as a coordination point for Zn(2+). 3 residues coordinate [4Fe-4S] cluster: cysteine 409, cysteine 412, and cysteine 416.

Belongs to the ThiC family. [4Fe-4S] cluster serves as cofactor.

It carries out the reaction 5-amino-1-(5-phospho-beta-D-ribosyl)imidazole + S-adenosyl-L-methionine = 4-amino-2-methyl-5-(phosphooxymethyl)pyrimidine + CO + 5'-deoxyadenosine + formate + L-methionine + 3 H(+). It participates in cofactor biosynthesis; thiamine diphosphate biosynthesis. In terms of biological role, catalyzes the synthesis of the hydroxymethylpyrimidine phosphate (HMP-P) moiety of thiamine from aminoimidazole ribotide (AIR) in a radical S-adenosyl-L-methionine (SAM)-dependent reaction. The polypeptide is Phosphomethylpyrimidine synthase (Carboxydothermus hydrogenoformans (strain ATCC BAA-161 / DSM 6008 / Z-2901)).